The following is a 377-amino-acid chain: Adaptive-response sensory kinase SasA (377 aa).

Residues 154-373 (MLVHDLRSPL…SFHFTLPVYR (220 aa)) enclose the Histidine kinase domain. The residue at position 157 (His157) is a Phosphohistidine; by autocatalysis.

As to quaternary structure, homooligomerizes. Interacts with KaiC. Participates in the KaiABC clock complex, whose core is composed of a KaiC homohexamer, 6 KaiB and up to 6 KaiA dimers. SasA and KaiB(fs) compete to bind to KaiC.

It catalyses the reaction ATP + protein L-histidine = ADP + protein N-phospho-L-histidine.. Its function is as follows. Member of the two-component regulatory system SasA/RpaA involved in genome-wide circadian gene expression. One of several clock output pathways. Participates in the Kai clock protein complex, the main circadian regulator in cyanobacteria, via its interaction with KaiC. KaiC enhances the autophosphorylation activity of SasA, which then transfers its phosphate group to RpaA to activate it. In addition to its output function, recruits fold-shifted KaiB (KaiB(fs)) to KaiC to cooperatively form the KaiB(6):KaiC(6) complex (independent of SasA kinase activity). Required for robustness of the circadian rhythm of gene expression and is involved in clock output, also required for adaptation to light/dark cycles. This chain is Adaptive-response sensory kinase SasA, found in Synechococcus sp. (strain JA-2-3B'a(2-13)) (Cyanobacteria bacterium Yellowstone B-Prime).